Reading from the N-terminus, the 223-residue chain is Rab-like protein 2A (223 aa).

GTP contacts are provided by residues 28-35, 76-80, and 133-136; these read GDSAVGKS, DTAGQ, and NKID. The tract at residues 200–223 is disordered; the sequence is KLEQKEEDTSGQEQSDTTKSPSPS. Over residues 210–223 the composition is skewed to polar residues; it reads GQEQSDTTKSPSPS.

This sequence belongs to the small GTPase superfamily. Rab family. As to quaternary structure, interacts with IFT27, IFT81, IFT172, ATP6V1E1, HK1, LDHC, MAPRE1 and HSPA2. As to expression, isoform 2 is expressed in the testis and localizes to the mid-piece of the sperm tail (at protein level). Isoform 2 is expressed at higher levels in testis than isoform 1. Isoform 1 and isoform 2 are widely expressed and notably within other tissues containing motile cilia including the lung, trachea, brain, ovary and kidney.

Plays an essential role in male fertility, sperm intra-flagellar transport, and tail assembly. Binds, in a GTP-regulated manner, to a specific set of effector proteins including key proteins involved in cilia development and function and delivers them into the growing sperm tail. This chain is Rab-like protein 2A (Rabl2), found in Mus musculus (Mouse).